We begin with the raw amino-acid sequence, 172 residues long: uncharacterized protein (172 aa).

In terms of domain architecture, HotDog ACOT-type spans 10 to 122; the sequence is KESKVVKTSR…FLTFVALDSN (113 aa). The interval 148–172 is disordered; it reads RANERKNRKRHSQALANALGTDKPW.

Belongs to the acyl coenzyme A hydrolase family.

This is an uncharacterized protein from Bacillus subtilis (strain 168).